Reading from the N-terminus, the 229-residue chain is ATP synthase subunit a (229 aa).

6 consecutive transmembrane segments (helical) span residues 25–45, 82–102, 104–124, 142–162, 181–201, and 202–222; these read ADAV…SIAA, FFPL…IGLV, GFFP…VVFV, FLGP…IGHL, LVLI…MMLM, and GVLV…IYIQ.

The protein belongs to the ATPase A chain family. F-type ATPases have 2 components, CF(1) - the catalytic core - and CF(0) - the membrane proton channel. CF(1) has five subunits: alpha(3), beta(3), gamma(1), delta(1), epsilon(1). CF(0) has three main subunits: a(1), b(2) and c(9-12). The alpha and beta chains form an alternating ring which encloses part of the gamma chain. CF(1) is attached to CF(0) by a central stalk formed by the gamma and epsilon chains, while a peripheral stalk is formed by the delta and b chains.

The protein localises to the cell inner membrane. Functionally, key component of the proton channel; it plays a direct role in the translocation of protons across the membrane. In Citrifermentans bemidjiense (strain ATCC BAA-1014 / DSM 16622 / JCM 12645 / Bem) (Geobacter bemidjiensis), this protein is ATP synthase subunit a.